An 806-amino-acid chain; its full sequence is Lon protease 1 (806 aa).

One can recognise a Lon N-terminal domain in the interval 31 to 235 (VPLIAVPSHP…KVLELIYEEL (205 aa)). 389-396 (GPPGVGKT) contacts ATP. The region spanning 626-806 (AMYSGMVMGL…NMREVIKLLF (181 aa)) is the Lon proteolytic domain. Active-site residues include S714 and K757.

Belongs to the peptidase S16 family. As to quaternary structure, homohexamer. Organized in a ring with a central cavity.

The protein resides in the cytoplasm. It catalyses the reaction Hydrolysis of proteins in presence of ATP.. Functionally, ATP-dependent serine protease that mediates the selective degradation of mutant and abnormal proteins as well as certain short-lived regulatory proteins. Required for cellular homeostasis and for survival from DNA damage and developmental changes induced by stress. Degrades polypeptides processively to yield small peptide fragments that are 5 to 10 amino acids long. Binds to DNA in a double-stranded, site-specific manner. The protein is Lon protease 1 of Borreliella burgdorferi (strain ATCC 35210 / DSM 4680 / CIP 102532 / B31) (Borrelia burgdorferi).